The primary structure comprises 3674 residues: Spectrin beta chain, non-erythrocytic 5 (3674 aa).

Positions 1-37 are disordered; the sequence is MAGQPHSPRELLGAAGHRSRRPSTELRVPPSPSLTMD. The interval 1 to 279 is actin-binding; the sequence is MAGQPHSPRE…IMTYVSLYYH (279 aa). Calponin-homology (CH) domains lie at 54–159 and 177–282; these read QMQE…LRFQ and LSTK…HYCS. Spectrin repeat units follow at residues 307 to 416, 428 to 529, 642 to 742, 747 to 810, 900 to 996, 1103 to 1206, 1209 to 1311, and 1315 to 1417; these read LQTQ…ALQQ, ARRF…RKQV, AEFL…ARLQ, VLQY…QGRA, GFCS…AVQL, ARQS…WLQE, ELQK…RQLL, and QLQE…ELQQ. The segment at 1441–1469 is disordered; it reads ALQSSETGQDLRSSQRLQKRHQQLESESR. The segment covering 1442 to 1456 has biased composition (polar residues); the sequence is LQSSETGQDLRSSQR. Spectrin repeat units lie at residues 1521 to 1624, 1628 to 1727, 1731 to 1835, 1842 to 1940, 1944 to 2046, 2052 to 2146, 2150 to 2253, 2256 to 2361, 2366 to 2467, 2471 to 2574, 2577 to 2680, 2683 to 2784, 2791 to 2890, 2894 to 2997, 3000 to 3103, 3106 to 3209, 3213 to 3311, 3318 to 3415, and 3422 to 3488; these read ELHQ…CLQQ, FQQY…RELE, RLHE…ALRD, VHRD…AQLE, LLAR…ERLQ, QLFL…HALH, LMAS…ELED, NFLE…QQLE, IHVL…EALD, QAQK…QLQQ, ELQL…RLEE, QLQA…AKLQ, RLRR…TALE, LLLK…LLQQ, EAQQ…GLQE, QLHQ…ENLA, EVHS…QWLA, AFLG…RWQR, and LQKL…EQEL. Residues 3533-3641 enclose the PH domain; that stretch reads TPTMEGSLEF…WWRALGSTAA (109 aa).

It belongs to the spectrin family. As to quaternary structure, probably associates with an alpha chain. Interacts (via C-terminus) with TRPC4. In terms of tissue distribution, expressed at very low levels in many tissues, with strongest expression in cerebellum, spinal cord, stomach, pituitary gland, liver, pancreas, salivary gland, kidney, bladder, and heart.

Its subcellular location is the cytoplasm. The protein resides in the cytoskeleton. The sequence is that of Spectrin beta chain, non-erythrocytic 5 (SPTBN5) from Homo sapiens (Human).